The primary structure comprises 427 residues: Glutamate-1-semialdehyde 2,1-aminomutase (427 aa).

Lys-268 is subject to N6-(pyridoxal phosphate)lysine.

The protein belongs to the class-III pyridoxal-phosphate-dependent aminotransferase family. HemL subfamily. Pyridoxal 5'-phosphate is required as a cofactor.

It localises to the cytoplasm. It catalyses the reaction (S)-4-amino-5-oxopentanoate = 5-aminolevulinate. It functions in the pathway porphyrin-containing compound metabolism; protoporphyrin-IX biosynthesis; 5-aminolevulinate from L-glutamyl-tRNA(Glu): step 2/2. The polypeptide is Glutamate-1-semialdehyde 2,1-aminomutase (Methanococcus maripaludis (strain C7 / ATCC BAA-1331)).